Here is a 65-residue protein sequence, read N- to C-terminus: MPKIKTNRGAAKRFKKTGTGKVKRAHAFTSHILTHKTSKRKRNLRQSNTVAAVDQKNICALIPYM.

Residues 1–23 (MPKIKTNRGAAKRFKKTGTGKVK) form a disordered region. Positions 10-23 (AAKRFKKTGTGKVK) are enriched in basic residues.

It belongs to the bacterial ribosomal protein bL35 family.

In Trichlorobacter lovleyi (strain ATCC BAA-1151 / DSM 17278 / SZ) (Geobacter lovleyi), this protein is Large ribosomal subunit protein bL35.